The primary structure comprises 217 residues: Phosphatidylserine decarboxylase proenzyme (217 aa).

Residue serine 183 is the Schiff-base intermediate with substrate; via pyruvic acid of the active site. Serine 183 is subject to Pyruvic acid (Ser); by autocatalysis.

The protein belongs to the phosphatidylserine decarboxylase family. PSD-A subfamily. As to quaternary structure, heterodimer of a large membrane-associated beta subunit and a small pyruvoyl-containing alpha subunit. Pyruvate is required as a cofactor. In terms of processing, is synthesized initially as an inactive proenzyme. Formation of the active enzyme involves a self-maturation process in which the active site pyruvoyl group is generated from an internal serine residue via an autocatalytic post-translational modification. Two non-identical subunits are generated from the proenzyme in this reaction, and the pyruvate is formed at the N-terminus of the alpha chain, which is derived from the carboxyl end of the proenzyme. The post-translation cleavage follows an unusual pathway, termed non-hydrolytic serinolysis, in which the side chain hydroxyl group of the serine supplies its oxygen atom to form the C-terminus of the beta chain, while the remainder of the serine residue undergoes an oxidative deamination to produce ammonia and the pyruvoyl prosthetic group on the alpha chain.

It localises to the cell membrane. The enzyme catalyses a 1,2-diacyl-sn-glycero-3-phospho-L-serine + H(+) = a 1,2-diacyl-sn-glycero-3-phosphoethanolamine + CO2. It functions in the pathway phospholipid metabolism; phosphatidylethanolamine biosynthesis; phosphatidylethanolamine from CDP-diacylglycerol: step 2/2. Functionally, catalyzes the formation of phosphatidylethanolamine (PtdEtn) from phosphatidylserine (PtdSer). This is Phosphatidylserine decarboxylase proenzyme from Cupriavidus pinatubonensis (strain JMP 134 / LMG 1197) (Cupriavidus necator (strain JMP 134)).